Here is a 56-residue protein sequence, read N- to C-terminus: Preprotein translocase subunit SecG (56 aa).

Over 1–29 (MAKEKATLPPTGAGLMRFFDEDTRAVKVS) the chain is Cytoplasmic. Residues 30–49 (PKGVIALTLLLIAFEFILHM) traverse the membrane as a helical segment. The Extracellular segment spans residues 50-56 (FGSSIFG).

This sequence belongs to the SEC61-beta family. Component of the protein translocase complex. Heterotrimer consisting of alpha (SecY), beta (SecG) and gamma (SecE) subunits. Can form oligomers of the heterotrimer.

The protein localises to the cell membrane. Its function is as follows. Involved in protein export. The function of the beta subunit is unknown, but it may be involved in stabilization of the trimeric complex. In Thermococcus kodakarensis (strain ATCC BAA-918 / JCM 12380 / KOD1) (Pyrococcus kodakaraensis (strain KOD1)), this protein is Preprotein translocase subunit SecG.